The primary structure comprises 878 residues: Leucine--tRNA ligase (878 aa).

The span at 1 to 14 shows a compositional bias: low complexity; the sequence is MTASKSSSATASAS. Positions 1–23 are disordered; it reads MTASKSSSATASASDRPDRYDPI. A 'HIGH' region motif is present at residues 58–68; that stretch reads PYPSGSLHMGH. The 'KMSKS' region motif lies at 632-636; sequence KMSKS. Lysine 635 provides a ligand contact to ATP.

Belongs to the class-I aminoacyl-tRNA synthetase family.

It is found in the cytoplasm. The enzyme catalyses tRNA(Leu) + L-leucine + ATP = L-leucyl-tRNA(Leu) + AMP + diphosphate. This is Leucine--tRNA ligase from Synechococcus sp. (strain WH7803).